We begin with the raw amino-acid sequence, 314 residues long: MMIPSVIAPPAIYSAFMRPAASLHSPFPAHPSFLVEDLLRINRPSGFLSQTAHSPCASPPNSTPLSIPDNCRILDRVSPGITEKHGPCSPKTPVSSKDPTYLKFGVSAILAPSPKKATSPPSVHSIHPKGFSVPYFDGSFCPFVRSSYFPAPSSVVPIPGTFSWPLAARGKPRRGMLRRAVFSDVQRKALEKMFQKQKYISKPDRKKLAAKLGLKDSQVKIWFQNRRMKWRNSKERELLSSGGCREQTLPTKTNPHPDLSDVGKKSSEDEDEDDACAPSHFCLSPRRVMSNSTDSSITFKHSDFSESEDEITVS.

The segment at residues Gly-175–Lys-234 is a DNA-binding region (homeobox). Disordered stretches follow at residues Lys-234–Ser-279 and Ser-292–Ser-314. The segment covering Asp-258–Ser-267 has biased composition (basic and acidic residues). The span at Ser-305–Ser-314 shows a compositional bias: acidic residues.

This sequence belongs to the H2.0 homeobox family.

The protein resides in the nucleus. This Danio rerio (Zebrafish) protein is Homeobox protein DBX1-A (dbx1a).